The following is a 599-amino-acid chain: Aspartate--tRNA ligase (599 aa).

Glu180 provides a ligand contact to L-aspartate. The aspartate stretch occupies residues Gln204–Lys207. Arg226 is an L-aspartate binding site. Residues Arg226–Glu228 and Gln235 each bind ATP. Residue His454 participates in L-aspartate binding. Residue Glu488 coordinates ATP. Position 495 (Arg495) interacts with L-aspartate. Gly540–Arg543 is an ATP binding site.

This sequence belongs to the class-II aminoacyl-tRNA synthetase family. Type 1 subfamily. As to quaternary structure, homodimer.

The protein localises to the cytoplasm. It catalyses the reaction tRNA(Asp) + L-aspartate + ATP = L-aspartyl-tRNA(Asp) + AMP + diphosphate. In terms of biological role, catalyzes the attachment of L-aspartate to tRNA(Asp) in a two-step reaction: L-aspartate is first activated by ATP to form Asp-AMP and then transferred to the acceptor end of tRNA(Asp). In Clostridium botulinum (strain Alaska E43 / Type E3), this protein is Aspartate--tRNA ligase.